Reading from the N-terminus, the 487-residue chain is Bifunctional protein GlmU (487 aa).

A pyrophosphorylase region spans residues 1–240; that stretch reads MAEVTNCAAI…PEELSGVNDR (240 aa). Residues 12–15, Lys-26, Gln-83, and 88–89 each bind UDP-N-acetyl-alpha-D-glucosamine; these read LAAG and GT. Asp-113 lines the Mg(2+) pocket. Residues Gly-150, Glu-165, Asn-180, and Asn-238 each contribute to the UDP-N-acetyl-alpha-D-glucosamine site. Mg(2+) is bound at residue Asn-238. The segment at 241–261 is linker; sequence VQLAAAGRLLNRRMVEEAMRG. Residues 262-487 form an N-acetyltransferase region; sequence GTTIVDPDTT…DAKANDQTTN (226 aa). UDP-N-acetyl-alpha-D-glucosamine is bound by residues Arg-343 and Lys-361. The Proton acceptor role is filled by His-373. Residues Tyr-376 and Asn-387 each contribute to the UDP-N-acetyl-alpha-D-glucosamine site. Acetyl-CoA-binding positions include Ala-390, 396 to 397, Ser-415, and Ala-433; that span reads NY. The tract at residues 449–487 is disordered; that stretch reads SGGKQRNIEGWVQKKRPGTPAAEAAGKAQDAKANDQTTN.

In the N-terminal section; belongs to the N-acetylglucosamine-1-phosphate uridyltransferase family. It in the C-terminal section; belongs to the transferase hexapeptide repeat family. As to quaternary structure, homotrimer. Requires Mg(2+) as cofactor.

The protein localises to the cytoplasm. It carries out the reaction alpha-D-glucosamine 1-phosphate + acetyl-CoA = N-acetyl-alpha-D-glucosamine 1-phosphate + CoA + H(+). The catalysed reaction is N-acetyl-alpha-D-glucosamine 1-phosphate + UTP + H(+) = UDP-N-acetyl-alpha-D-glucosamine + diphosphate. It participates in nucleotide-sugar biosynthesis; UDP-N-acetyl-alpha-D-glucosamine biosynthesis; N-acetyl-alpha-D-glucosamine 1-phosphate from alpha-D-glucosamine 6-phosphate (route II): step 2/2. The protein operates within nucleotide-sugar biosynthesis; UDP-N-acetyl-alpha-D-glucosamine biosynthesis; UDP-N-acetyl-alpha-D-glucosamine from N-acetyl-alpha-D-glucosamine 1-phosphate: step 1/1. It functions in the pathway bacterial outer membrane biogenesis; LPS lipid A biosynthesis. In terms of biological role, catalyzes the last two sequential reactions in the de novo biosynthetic pathway for UDP-N-acetylglucosamine (UDP-GlcNAc). The C-terminal domain catalyzes the transfer of acetyl group from acetyl coenzyme A to glucosamine-1-phosphate (GlcN-1-P) to produce N-acetylglucosamine-1-phosphate (GlcNAc-1-P), which is converted into UDP-GlcNAc by the transfer of uridine 5-monophosphate (from uridine 5-triphosphate), a reaction catalyzed by the N-terminal domain. This Corynebacterium aurimucosum (strain ATCC 700975 / DSM 44827 / CIP 107346 / CN-1) (Corynebacterium nigricans) protein is Bifunctional protein GlmU.